The primary structure comprises 317 residues: Cytochrome f (317 aa).

The first 34 residues, 1-34 (MINFKKQIMKKTTFFLCAMLLVSSILIAPRSSLA), serve as a signal peptide directing secretion. Positions 35, 55, 58, and 59 each coordinate heme. The helical transmembrane segment at 284–304 (IIGLIAFFIGVGLTQILLVLK) threads the bilayer.

This sequence belongs to the cytochrome f family. As to quaternary structure, the 4 large subunits of the cytochrome b6-f complex are cytochrome b6, subunit IV (17 kDa polypeptide, PetD), cytochrome f and the Rieske protein, while the 4 small subunits are PetG, PetL, PetM and PetN. The complex functions as a dimer. Heme is required as a cofactor.

Its subcellular location is the cellular thylakoid membrane. In terms of biological role, component of the cytochrome b6-f complex, which mediates electron transfer between photosystem II (PSII) and photosystem I (PSI), cyclic electron flow around PSI, and state transitions. This chain is Cytochrome f, found in Prochlorococcus marinus (strain MIT 9515).